The sequence spans 423 residues: Histidine--tRNA ligase (423 aa).

It belongs to the class-II aminoacyl-tRNA synthetase family. Homodimer.

Its subcellular location is the cytoplasm. It catalyses the reaction tRNA(His) + L-histidine + ATP = L-histidyl-tRNA(His) + AMP + diphosphate + H(+). The sequence is that of Histidine--tRNA ligase (hisS) from Haemophilus influenzae (strain ATCC 51907 / DSM 11121 / KW20 / Rd).